Reading from the N-terminus, the 267-residue chain is MPFSTPAQPSCSAASPLRLRYIDASTAQKIDEDLMSASGGFSLDQLMELAGLSCAQAVFECYPPTKYPNVLVACGPGNQGGDGLVAARHLYHFGYEPVVWYPKQGKTELFSRLKVQLHNLGLPFVSQDDFQDALEEADVVLDSIFGFNFKGDVREPFRAPLEILKYESRIEFEARKKMPPIVSVDIPSSWHVELGNVNKAFTPSVLISLSAPKLGALAFAGRHFLGGRFLPEDLEAKFDLQLPDYPGTEQVIEITGAKPLQTQEADL.

The YjeF N-terminal domain occupies 27-242 (AQKIDEDLMS…DLEAKFDLQL (216 aa)). (6S)-NADPHX is bound at residue 78–82 (NQGGD). Positions 79 and 142 each coordinate K(+). (6S)-NADPHX-binding positions include 146-152 (GFNFKGD) and Asp-185. Ser-188 lines the K(+) pocket.

Belongs to the NnrE/AIBP family. K(+) is required as a cofactor.

The protein localises to the cytoplasm. It is found in the mitochondrion. The catalysed reaction is (6R)-NADHX = (6S)-NADHX. The enzyme catalyses (6R)-NADPHX = (6S)-NADPHX. Its function is as follows. Catalyzes the epimerization of the S- and R-forms of NAD(P)HX, a damaged form of NAD(P)H that is a result of enzymatic or heat-dependent hydration. This is a prerequisite for the S-specific NAD(P)H-hydrate dehydratase to allow the repair of both epimers of NAD(P)HX. This is NAD(P)H-hydrate epimerase from Mycosarcoma maydis (Corn smut fungus).